A 412-amino-acid chain; its full sequence is DNA polymerase IV (412 aa).

Residues 12 to 193 form the UmuC domain; sequence ILHVDMNCFF…LPVGAMHGIG (182 aa). Asp16 and Asp112 together coordinate Mg(2+). Glu113 is an active-site residue. Positions 235–257 are disordered; that stretch reads KGMDDREVDPSQMGQHKSVGNSM. A compositionally biased stretch (polar residues) spans 246-257; that stretch reads QMGQHKSVGNSM.

This sequence belongs to the DNA polymerase type-Y family. In terms of assembly, monomer. Requires Mg(2+) as cofactor.

The protein resides in the cytoplasm. The enzyme catalyses DNA(n) + a 2'-deoxyribonucleoside 5'-triphosphate = DNA(n+1) + diphosphate. In terms of biological role, poorly processive, error-prone DNA polymerase involved in untargeted mutagenesis. Copies undamaged DNA at stalled replication forks, which arise in vivo from mismatched or misaligned primer ends. These misaligned primers can be extended by PolIV. Exhibits no 3'-5' exonuclease (proofreading) activity. May be involved in translesional synthesis, in conjunction with the beta clamp from PolIII. In Bacillus anthracis, this protein is DNA polymerase IV.